The following is a 529-amino-acid chain: Bifunctional purine biosynthesis protein PurH (529 aa).

An MGS-like domain is found at 1-148 (MQQRRPVRRA…KNHKDVAIVV (148 aa)).

It belongs to the PurH family.

The enzyme catalyses (6R)-10-formyltetrahydrofolate + 5-amino-1-(5-phospho-beta-D-ribosyl)imidazole-4-carboxamide = 5-formamido-1-(5-phospho-D-ribosyl)imidazole-4-carboxamide + (6S)-5,6,7,8-tetrahydrofolate. It carries out the reaction IMP + H2O = 5-formamido-1-(5-phospho-D-ribosyl)imidazole-4-carboxamide. It functions in the pathway purine metabolism; IMP biosynthesis via de novo pathway; 5-formamido-1-(5-phospho-D-ribosyl)imidazole-4-carboxamide from 5-amino-1-(5-phospho-D-ribosyl)imidazole-4-carboxamide (10-formyl THF route): step 1/1. Its pathway is purine metabolism; IMP biosynthesis via de novo pathway; IMP from 5-formamido-1-(5-phospho-D-ribosyl)imidazole-4-carboxamide: step 1/1. This chain is Bifunctional purine biosynthesis protein PurH, found in Salmonella dublin (strain CT_02021853).